Consider the following 425-residue polypeptide: ATP-dependent RNA helicase RhlB (425 aa).

The Q motif motif lies at 9–37 (TRFADLALHPKIQQAISSAGFEYCTPIQA). A Helicase ATP-binding domain is found at 40-218 (LPVALSNRDV…YEHMNAPTKL (179 aa)). 53–60 (AQTGTGKT) contacts ATP. Positions 164–167 (DEAD) match the DEAD box motif. A Helicase C-terminal domain is found at 242 to 389 (KFPLLLTLIE…VTKYDGDALL (148 aa)). The segment at 391-425 (DLRRPRPIQRRRRHNSGGGKGKPRGRRSGPPRNAS) is disordered. The span at 395–419 (PRPIQRRRRHNSGGGKGKPRGRRSG) shows a compositional bias: basic residues.

The protein belongs to the DEAD box helicase family. RhlB subfamily. Component of the RNA degradosome, which is a multiprotein complex involved in RNA processing and mRNA degradation.

It localises to the cytoplasm. The enzyme catalyses ATP + H2O = ADP + phosphate + H(+). In terms of biological role, DEAD-box RNA helicase involved in RNA degradation. Has RNA-dependent ATPase activity and unwinds double-stranded RNA. The sequence is that of ATP-dependent RNA helicase RhlB from Idiomarina loihiensis (strain ATCC BAA-735 / DSM 15497 / L2-TR).